Consider the following 377-residue polypeptide: tRNA-specific 2-thiouridylase MnmA (377 aa).

ATP contacts are provided by residues 12–19 (GMSGGVDS) and M38. Residues 98–100 (NPD) form an interaction with target base in tRNA region. C103 (nucleophile) is an active-site residue. C103 and C200 are disulfide-bonded. Residue G127 participates in ATP binding. Residues 150-152 (KDQ) are interaction with tRNA. C200 functions as the Cysteine persulfide intermediate in the catalytic mechanism. Residues 314 to 315 (RY) form an interaction with tRNA region.

The protein belongs to the MnmA/TRMU family.

The protein localises to the cytoplasm. The enzyme catalyses S-sulfanyl-L-cysteinyl-[protein] + uridine(34) in tRNA + AH2 + ATP = 2-thiouridine(34) in tRNA + L-cysteinyl-[protein] + A + AMP + diphosphate + H(+). Catalyzes the 2-thiolation of uridine at the wobble position (U34) of tRNA, leading to the formation of s(2)U34. The chain is tRNA-specific 2-thiouridylase MnmA from Limosilactobacillus reuteri (strain DSM 20016) (Lactobacillus reuteri).